Consider the following 437-residue polypeptide: Nuclear distribution protein PAC1 (437 aa).

Positions 64–94 form a coiled coil; the sequence is LSVIRLQRKVMDLETRLEAAEREASSTHKAN. WD repeat units lie at residues 114–153, 156–217, 221–260, 263–301, 304–356, 358–397, and 401–437; these read LHKQ…IETT, AHTR…ANVK, GHDH…CVRT, GHTD…GKMT, GHEH…LLIL, GHDN…RCIR, and AHGH…KVWQ. The segment at 165 to 186 is disordered; it reads DFSQPDTGASRDKSHDKPRADV. Over residues 173-186 the composition is skewed to basic and acidic residues; sequence ASRDKSHDKPRADV.

Belongs to the WD repeat LIS1/nudF family. As to quaternary structure, self-associates. Interacts with NDL1 and dynein.

Its subcellular location is the cytoplasm. The protein localises to the cytoskeleton. It is found in the spindle pole. Its function is as follows. Positively regulates the activity of the minus-end directed microtubule motor protein dynein. Plays a central role in positioning the mitotic spindle at the bud neck during cell division. Targets cytoplasmic dynein to microtubule plus ends, thereby promoting dynein-mediated microtubule sliding along the bud cortex and consequently the movement of the mitotic spindle to the bud neck. The protein is Nuclear distribution protein PAC1 of Yarrowia lipolytica (strain CLIB 122 / E 150) (Yeast).